We begin with the raw amino-acid sequence, 244 residues long: MEVTGLSAPTVNVFISSSLNSFRSQKRYSRSLTVAEFKCKLQLVVGSPASCMELELYGPDDKFCCKLDQDDALLGSYPVDDGCRIHVIDHSGARLGEYEDISKVEKYEISQEAYEQRQDSIRSFLKRNKLGRFNEEERAQQEAENSQRLIEEEAQASTIPVGSRCEVRTPGQPPRRGTVMYVGLTDFKPGYWIGIRYDEPLGKNDGSVNGKRYFECQAKYGAFVKPSVVTVGDFPEEDYGLDEM.

M1 carries the post-translational modification N-acetylmethionine. At Y98 the chain carries Phosphotyrosine. Position 110 is a phosphoserine (S110). The CAP-Gly domain occupies 183–225 (GLTDFKPGYWIGIRYDEPLGKNDGSVNGKRYFECQAKYGAFVK). K219 carries the N6-acetyllysine modification.

Belongs to the TBCB family. As to quaternary structure, supercomplex made of cofactors A to E. Cofactors A and D function by capturing and stabilizing tubulin in a quasi-native conformation. Cofactor E binds to the cofactor D-tubulin complex; interaction with cofactor C then causes the release of tubulin polypeptides that are committed to the native state. Cofactors B and E can form a heterodimer which binds to alpha-tubulin and enhances their ability to dissociate tubulin heterodimers. Interacts with GAN. Interacts with DCTN1. Ubiquitinated in the presence of GAN which targets it for degradation by the proteasome. In terms of processing, phosphorylation by PAK1 is required for normal function.

Its subcellular location is the cytoplasm. The protein localises to the cytoskeleton. Binds to alpha-tubulin folding intermediates after their interaction with cytosolic chaperonin in the pathway leading from newly synthesized tubulin to properly folded heterodimer. Involved in regulation of tubulin heterodimer dissociation. May function as a negative regulator of axonal growth. This chain is Tubulin-folding cofactor B (TBCB), found in Bos taurus (Bovine).